Reading from the N-terminus, the 82-residue chain is Quinohemoprotein amine dehydrogenase subunit gamma (82 aa).

The segment at residues 7-16 (CTTSFDPGWE) is a cross-link (4-cysteinyl-glutamic acid (Cys-Glu)). Cross-links (3-cysteinyl-aspartic acid (Cys-Asp)) lie at residues 27–33 (CQPMEAD) and 41–49 (CWWPAQVAD). Residue D33 is the Proton acceptor of the active site. The segment at residues 37-43 (CADPCWW) is a cross-link (4'-cysteinyl-tryptophylquinone (Cys-Trp)). A Tryptophylquinone modification is found at W43.

Belongs to the quinohemoprotein amine dehydrogenase subunit gamma family. Heterotrimer of an alpha, a beta and a gamma subunit. It depends on cysteine tryptophylquinone residue as a cofactor. Post-translationally, the cysteine tryptophylquinone (CTQ) is generated by oxidation of the indole ring of a tryptophan residue to form tryptophylquinone, followed by covalent cross-linking with a cysteine residue.

The protein resides in the periplasm. The catalysed reaction is 2 Fe(III)-[cytochrome c550] + an aliphatic amine + H2O = 2 Fe(II)-[cytochrome c550] + an aldehyde + NH4(+) + 2 H(+). Inhibited by carbonyl reagents such as hydrazine, hydroxylamine, phenylhydrazine and semicarbazide. Catalyzes the oxidative deamination of a wide range of primary aliphatic and aromatic amines. The physiological electron acceptor is the constitutive cytochrome c550. This chain is Quinohemoprotein amine dehydrogenase subunit gamma (qhnDH), found in Paracoccus denitrificans.